A 195-amino-acid chain; its full sequence is MEATVVATTQLTQDSFYQPFSESLEKQDRECKVLKRQRSSSPELLRCKRRLTFNGLGYTIPQQQPMAVARRNERERNRVKQVNMGFQTLRQHVPNGAANKKMSKVETLRSAVEYIRALQQLLDEHDAVSAVLQCGVPSPSVSNAYSAGPESPHSAYSSDEGSYEHLSSEEQELLDFTTWFDRYESGASMATKDWC.

A bHLH domain is found at 66 to 118; sequence MAVARRNERERNRVKQVNMGFQTLRQHVPNGAANKKMSKVETLRSAVEYIRAL. The segment at 141-164 is disordered; it reads VSNAYSAGPESPHSAYSSDEGSYE.

In terms of assembly, efficient DNA binding requires dimerization with another bHLH protein. As to expression, in the 24 hours embryo, expressed in hindbrain close to the anterior and posterior boundaries of rhombomeres 2-6 and in ventral cells close to the floor plate of most rhombomeres. Also expressed in the telencephalon, diencephalon, tegmentum and spinal cord at sites distinct from those expressing ascl1a. Not expressed in the adenohypophysis.

It is found in the nucleus. Functionally, transcriptional regulator. May mediate transcription activation by binding to the E box-containing promoter. Involved in neurogenesis. Involved in maintaining rhombomere boundaries in the hindbrain, probably via up-regulation of delta expression. May mediate transcription activation by binding to the E box-containing promoter. This is Achaete-scute homolog 1b from Danio rerio (Zebrafish).